The sequence spans 417 residues: NADH-quinone oxidoreductase subunit D (417 aa).

The protein belongs to the complex I 49 kDa subunit family. NDH-1 is composed of 14 different subunits. Subunits NuoB, C, D, E, F, and G constitute the peripheral sector of the complex.

The protein resides in the cell inner membrane. It carries out the reaction a quinone + NADH + 5 H(+)(in) = a quinol + NAD(+) + 4 H(+)(out). In terms of biological role, NDH-1 shuttles electrons from NADH, via FMN and iron-sulfur (Fe-S) centers, to quinones in the respiratory chain. The immediate electron acceptor for the enzyme in this species is believed to be ubiquinone. Couples the redox reaction to proton translocation (for every two electrons transferred, four hydrogen ions are translocated across the cytoplasmic membrane), and thus conserves the redox energy in a proton gradient. This Nitrosospira multiformis (strain ATCC 25196 / NCIMB 11849 / C 71) protein is NADH-quinone oxidoreductase subunit D.